We begin with the raw amino-acid sequence, 326 residues long: Phenylalanine--tRNA ligase alpha subunit (326 aa).

E251 provides a ligand contact to Mg(2+).

Belongs to the class-II aminoacyl-tRNA synthetase family. Phe-tRNA synthetase alpha subunit type 1 subfamily. As to quaternary structure, tetramer of two alpha and two beta subunits. The cofactor is Mg(2+).

The protein resides in the cytoplasm. It carries out the reaction tRNA(Phe) + L-phenylalanine + ATP = L-phenylalanyl-tRNA(Phe) + AMP + diphosphate + H(+). This chain is Phenylalanine--tRNA ligase alpha subunit, found in Pseudoalteromonas atlantica (strain T6c / ATCC BAA-1087).